The chain runs to 296 residues: Nucleotide-binding protein SAG0531 (296 aa).

13 to 20 (GMSGAGKT) serves as a coordination point for ATP. 63–66 (DMRS) is a GTP binding site.

It belongs to the RapZ-like family.

Displays ATPase and GTPase activities. This chain is Nucleotide-binding protein SAG0531, found in Streptococcus agalactiae serotype V (strain ATCC BAA-611 / 2603 V/R).